The chain runs to 143 residues: Transcriptional regulator MraZ (143 aa).

SpoVT-AbrB domains are found at residues 5–47 (TYTP…PKEE) and 76–119 (ADEQ…DAQA).

It belongs to the MraZ family. Forms oligomers.

It localises to the cytoplasm. The protein resides in the nucleoid. In Corynebacterium efficiens (strain DSM 44549 / YS-314 / AJ 12310 / JCM 11189 / NBRC 100395), this protein is Transcriptional regulator MraZ.